A 175-amino-acid polypeptide reads, in one-letter code: Translation initiation factor IF-3 (175 aa).

It belongs to the IF-3 family. Monomer.

It localises to the cytoplasm. IF-3 binds to the 30S ribosomal subunit and shifts the equilibrium between 70S ribosomes and their 50S and 30S subunits in favor of the free subunits, thus enhancing the availability of 30S subunits on which protein synthesis initiation begins. The sequence is that of Translation initiation factor IF-3 from Staphylococcus epidermidis (strain ATCC 35984 / DSM 28319 / BCRC 17069 / CCUG 31568 / BM 3577 / RP62A).